Consider the following 43-residue polypeptide: Protein PsbN (43 aa).

Residues 5-27 form a helical membrane-spanning segment; the sequence is TIFSIFFSCLLIGLTGYSLYTSF.

It belongs to the PsbN family.

The protein localises to the plastid. The protein resides in the chloroplast thylakoid membrane. May play a role in photosystem I and II biogenesis. This Mesostigma viride (Green alga) protein is Protein PsbN.